A 350-amino-acid polypeptide reads, in one-letter code: MYSLLRPALFCMDAERAHGAGLRALDLAYRSGTLGLLASRPAPLPTRAFGLEFPNPVGLAAGLDKNGEHIDALFALGFGYVEIGTVTPRPQAGNPQPRLFRVPEHLGVINRMGFNNAGVDALVANVRAARRDRGILGINIGKNKDTPNELAHTDYLTCLEKVYALADYITVNISSPNTAGLRELQEEQALRELVSRLREGQETLAARHGKRVPMLVKVAPDLSDADVDAAARVLAELQVDGVIATNTTIARVGMENHPLASEAGGLSGAPVMARSTAVLRRLRTRLPESIPLIGVGGICSGADAAAKMSAGATMVQLYSGLVYRGPALVGECVESIRRRREAPSSGVAHL.

FMN-binding positions include 61–65 (AGLDK) and Thr85. Position 65 (Lys65) interacts with substrate. Residue 110–114 (NRMGF) coordinates substrate. FMN contacts are provided by Asn139 and Asn172. Asn172 provides a ligand contact to substrate. Catalysis depends on Ser175, which acts as the Nucleophile. Asn177 contacts substrate. Lys217 and Thr245 together coordinate FMN. A substrate-binding site is contributed by 246–247 (NT). FMN-binding positions include Gly268, Gly297, and 318–319 (YS).

It belongs to the dihydroorotate dehydrogenase family. Type 2 subfamily. As to quaternary structure, monomer. FMN is required as a cofactor.

The protein resides in the cell membrane. The enzyme catalyses (S)-dihydroorotate + a quinone = orotate + a quinol. It functions in the pathway pyrimidine metabolism; UMP biosynthesis via de novo pathway; orotate from (S)-dihydroorotate (quinone route): step 1/1. Catalyzes the conversion of dihydroorotate to orotate with quinone as electron acceptor. The protein is Dihydroorotate dehydrogenase (quinone) of Flavobacterium lutescens.